The following is a 462-amino-acid chain: Cytochrome P450 20A1 (462 aa).

A helical membrane pass occupies residues 4 to 24; it reads FAIFAVTFLLALVGAVLYLYP. Cys409 is a binding site for heme.

Belongs to the cytochrome P450 family. Heme is required as a cofactor.

The protein localises to the membrane. The chain is Cytochrome P450 20A1 (CYP20A1) from Bos taurus (Bovine).